A 158-amino-acid chain; its full sequence is Vasotocin-neurophysin VT 2 (158 aa).

The first 19 residues, 1–19 (MPHSTLLLCVIGLLAFSSA), serve as a signal peptide directing secretion. Cysteines 20 and 25 form a disulfide. Glycine amide is present on Gly-28. 7 cysteine pairs are disulfide-bonded: Cys-41–Cys-85, Cys-44–Cys-58, Cys-52–Cys-75, Cys-59–Cys-65, Cys-92–Cys-105, Cys-99–Cys-117, and Cys-106–Cys-111.

Belongs to the vasopressin/oxytocin family. Post-translationally, seven disulfide bonds are present in neurophysin.

The protein localises to the secreted. Vasotocin is an antidiuretic hormone. This is Vasotocin-neurophysin VT 2 from Oncorhynchus keta (Chum salmon).